The chain runs to 79 residues: Small ribosomal subunit protein bS18 (79 aa).

Belongs to the bacterial ribosomal protein bS18 family. Part of the 30S ribosomal subunit. Forms a tight heterodimer with protein bS6.

Binds as a heterodimer with protein bS6 to the central domain of the 16S rRNA, where it helps stabilize the platform of the 30S subunit. The chain is Small ribosomal subunit protein bS18 from Bacillus pumilus (strain SAFR-032).